Consider the following 351-residue polypeptide: Histidinol-phosphate aminotransferase (351 aa).

Positions 1 to 26 are disordered; it reads MRFRAELEPLSPYNPPRASQEAAAER. K223 carries the N6-(pyridoxal phosphate)lysine modification.

It belongs to the class-II pyridoxal-phosphate-dependent aminotransferase family. Histidinol-phosphate aminotransferase subfamily. As to quaternary structure, homodimer. Pyridoxal 5'-phosphate is required as a cofactor.

It carries out the reaction L-histidinol phosphate + 2-oxoglutarate = 3-(imidazol-4-yl)-2-oxopropyl phosphate + L-glutamate. The protein operates within amino-acid biosynthesis; L-histidine biosynthesis; L-histidine from 5-phospho-alpha-D-ribose 1-diphosphate: step 7/9. In Rubrobacter xylanophilus (strain DSM 9941 / JCM 11954 / NBRC 16129 / PRD-1), this protein is Histidinol-phosphate aminotransferase.